Consider the following 541-residue polypeptide: Chaperonin GroEL (541 aa).

ATP is bound by residues 29-32 (TLGP), 86-90 (DGTTT), Gly413, 480-482 (NAA), and Asp496.

This sequence belongs to the chaperonin (HSP60) family. As to quaternary structure, forms a cylinder of 14 subunits composed of two heptameric rings stacked back-to-back. Interacts with the co-chaperonin GroES.

It localises to the cytoplasm. The catalysed reaction is ATP + H2O + a folded polypeptide = ADP + phosphate + an unfolded polypeptide.. Together with its co-chaperonin GroES, plays an essential role in assisting protein folding. The GroEL-GroES system forms a nano-cage that allows encapsulation of the non-native substrate proteins and provides a physical environment optimized to promote and accelerate protein folding. The polypeptide is Chaperonin GroEL (Gardnerella vaginalis).